Here is a 215-residue protein sequence, read N- to C-terminus: Cytochrome b6 (215 aa).

The helical transmembrane segment at 32 to 52 (IFYCLGGITLTCFLVQVATGF) threads the bilayer. Cys-35 is a heme c binding site. Heme b-binding residues include His-86 and His-100. 3 helical membrane-spanning segments follow: residues 90-110 (ASMM…TGGF), 116-136 (LTWV…VTGY), and 186-206 (LHTF…FPMI). The heme b site is built by His-187 and His-202.

It belongs to the cytochrome b family. PetB subfamily. As to quaternary structure, the 4 large subunits of the cytochrome b6-f complex are cytochrome b6, subunit IV (17 kDa polypeptide, PetD), cytochrome f and the Rieske protein, while the 4 small subunits are PetG, PetL, PetM and PetN. The complex functions as a dimer. Requires heme b as cofactor. Heme c is required as a cofactor.

The protein resides in the plastid. The protein localises to the chloroplast thylakoid membrane. Its function is as follows. Component of the cytochrome b6-f complex, which mediates electron transfer between photosystem II (PSII) and photosystem I (PSI), cyclic electron flow around PSI, and state transitions. The chain is Cytochrome b6 from Liriodendron tulipifera (Tuliptree).